Here is a 66-residue protein sequence, read N- to C-terminus: Large ribosomal subunit protein bL35 (66 aa).

Residues 19–45 (SGKVVAAQSTKRHGMTKRSKRSLRTRR) form a disordered region. Residues 28 to 45 (TKRHGMTKRSKRSLRTRR) show a composition bias toward basic residues.

Belongs to the bacterial ribosomal protein bL35 family.

The polypeptide is Large ribosomal subunit protein bL35 (Anaplasma phagocytophilum (strain HZ)).